The primary structure comprises 405 residues: Replication factor C large subunit (405 aa).

47 to 54 (GPPGVGKT) is an ATP binding site.

This sequence belongs to the activator 1 small subunits family. RfcL subfamily. As to quaternary structure, heteropentamer composed of four small subunits (RfcS) and one large subunit (RfcL). Probably interacts with PCNA subunit PCNA3.

In terms of biological role, part of the RFC clamp loader complex which loads the PCNA sliding clamp onto DNA. The complex possesses DNA-dependent ATPase activity. In Saccharolobus solfataricus (strain ATCC 35092 / DSM 1617 / JCM 11322 / P2) (Sulfolobus solfataricus), this protein is Replication factor C large subunit (rfcL).